The primary structure comprises 134 residues: Holo-[acyl-carrier-protein] synthase (134 aa).

Mg(2+)-binding residues include aspartate 8 and glutamate 58.

Belongs to the P-Pant transferase superfamily. AcpS family. Mg(2+) is required as a cofactor.

The protein localises to the cytoplasm. The enzyme catalyses apo-[ACP] + CoA = holo-[ACP] + adenosine 3',5'-bisphosphate + H(+). Transfers the 4'-phosphopantetheine moiety from coenzyme A to a Ser of acyl-carrier-protein. The protein is Holo-[acyl-carrier-protein] synthase of Ruminiclostridium cellulolyticum (strain ATCC 35319 / DSM 5812 / JCM 6584 / H10) (Clostridium cellulolyticum).